The primary structure comprises 793 residues: Protein PAT1 homolog (793 aa).

S200 and S208 each carry phosphoserine. Disordered stretches follow at residues 203–256 (PPGS…TGNR) and 292–312 (MLQQPPHQNGLMPPQMQGSQN). The span at 219-242 (PYQSGGPQMGSPNFSPFPNLQPQL) shows a compositional bias: polar residues. A phosphoserine mark is found at S342 and S343. Residues 476–501 (RPLLEVDPPNSAKFGNAEHKPTDKPL) form a disordered region. The span at 491 to 501 (NAEHKPTDKPL) shows a compositional bias: basic and acidic residues.

As to quaternary structure, interacts with MPK4 and SUMM2. Phosphorylated at Ser-208 by MPK4 upon flg22 elicitation. Phosphorylated at Ser-200, Ser-342 and Ser-343 upon flg22 elicitation.

The protein resides in the cytoplasm. The protein localises to the P-body. In terms of biological role, activator of mRNA decapping. Involved in mRNA decay via decapping. Involved in disease resistance in response to biotrophic and necrotrophic pathogens. Is part of a signaling pathway including MPK4 and the disease resistance protein SUMM2. This Arabidopsis thaliana (Mouse-ear cress) protein is Protein PAT1 homolog.